We begin with the raw amino-acid sequence, 353 residues long: UPF0283 membrane protein YcjF (353 aa).

Over residues 1-19 the composition is skewed to basic and acidic residues; sequence MSEPLKPRIDFAEPLKEEP. Positions 1 to 35 are disordered; that stretch reads MSEPLKPRIDFAEPLKEEPTSAFKAQQTFSEAESR. The next 3 helical transmembrane spans lie at 70 to 90, 100 to 120, and 213 to 233; these read MVMG…VQWT, VALG…GSVV, and ESTL…FIAW.

The protein belongs to the UPF0283 family.

It is found in the cell inner membrane. This chain is UPF0283 membrane protein YcjF, found in Salmonella gallinarum (strain 287/91 / NCTC 13346).